The sequence spans 442 residues: Lipoyl synthase, apicoplast (442 aa).

Positions 1–23 (MRVLTPSLYIYAFFIFCVRFKCG) are cleaved as a signal peptide. Residues 104–154 (LGEHQLKGKRKESATNVEKEKKEKEQQEERLPVPKVGNKMPEKKPDWFHVP) form a disordered region. Over residues 114 to 135 (KESATNVEKEKKEKEQQEERLP) the composition is skewed to basic and acidic residues. Cys177, Cys182, Cys188, Cys203, Cys207, Cys210, and Ser418 together coordinate [4Fe-4S] cluster. The Radical SAM core domain occupies 189-407 (WNIGTATIML…KEEGMKMGFK (219 aa)).

It belongs to the radical SAM superfamily. Lipoyl synthase family. [4Fe-4S] cluster is required as a cofactor.

Its subcellular location is the plastid. It localises to the apicoplast. The enzyme catalyses [[Fe-S] cluster scaffold protein carrying a second [4Fe-4S](2+) cluster] + N(6)-octanoyl-L-lysyl-[protein] + 2 oxidized [2Fe-2S]-[ferredoxin] + 2 S-adenosyl-L-methionine + 4 H(+) = [[Fe-S] cluster scaffold protein] + N(6)-[(R)-dihydrolipoyl]-L-lysyl-[protein] + 4 Fe(3+) + 2 hydrogen sulfide + 2 5'-deoxyadenosine + 2 L-methionine + 2 reduced [2Fe-2S]-[ferredoxin]. The protein operates within protein modification; protein lipoylation via endogenous pathway; protein N(6)-(lipoyl)lysine from octanoyl-[acyl-carrier-protein]: step 2/2. Catalyzes the radical-mediated insertion of two sulfur atoms into the C-6 and C-8 positions of the octanoyl moiety bound to the lipoyl domains of lipoate-dependent enzymes, thereby converting the octanoylated domains into lipoylated derivatives. This is Lipoyl synthase, apicoplast from Plasmodium knowlesi (strain H).